The following is a 758-amino-acid chain: Probable ubiquitin carboxyl-terminal hydrolase creB (758 aa).

The interval 1 to 27 is disordered; it reads MGSFLRSFRRDVGSSTPSVGATPAKKE. The region spanning 57–468 is the USP domain; that stretch reads FGMENYGNTC…CAYVLFYQET (412 aa). The active-site Nucleophile is the C66. Disordered regions lie at residues 116–148 and 243–268; these read AEAQ…DSSE and QPIP…SKTP. Positions 253–268 are enriched in polar residues; the sequence is TTDSSRQSISSGSKTP. H419 serves as the catalytic Proton acceptor. The segment at 514–744 is disordered; sequence IPVQDEPQRH…KGDRAGHGKW (231 aa). Residues 554 to 563 show a composition bias toward pro residues; the sequence is ATPPPVPPIP. A coiled-coil region spans residues 573-631; it reads KKSDIQSKKERAKEEKERKAAEKEMEKQRRKEQEARVKENQRREEAELKAALEASKASK. Basic and acidic residues-rich tracts occupy residues 573-650 and 729-740; these read KKSD…DPKR and DALKSPKGDRAG.

Belongs to the peptidase C19 family. Interacts with creA, creC and qutD.

The catalysed reaction is Thiol-dependent hydrolysis of ester, thioester, amide, peptide and isopeptide bonds formed by the C-terminal Gly of ubiquitin (a 76-residue protein attached to proteins as an intracellular targeting signal).. In terms of biological role, ubiquitin thioesterase component of the regulatory network controlling carbon source utilization through ubiquitination and deubiquitination involving creA, creB, creC, creD and acrB. Deubiquitinates the creA catabolic repressor and the quinate permease qutD. Also plays a role in response to carbon starvation and the control of extracellular proteases activity. In Aspergillus niger (strain ATCC MYA-4892 / CBS 513.88 / FGSC A1513), this protein is Probable ubiquitin carboxyl-terminal hydrolase creB (creB).